The sequence spans 209 residues: MICOS complex subunit mic19 (209 aa).

Coiled coils occupy residues 48–86 (LELEIQNRVAKELERLRAREQQTLAEIEKRLSEAKDTGS) and 127–156 (EVAAVNKELNRESVNSEIEELRVKLEGRKK).

It belongs to the MICOS complex subunit Mic19 family. As to quaternary structure, component of the mitochondrial contact site and cristae organizing system (MICOS) complex.

It localises to the mitochondrion inner membrane. In terms of biological role, component of the MICOS complex, a large protein complex of the mitochondrial inner membrane that plays crucial roles in the maintenance of crista junctions, inner membrane architecture, and formation of contact sites to the outer membrane. Involved in osmoadaptation. This is MICOS complex subunit mic19 from Emericella nidulans (strain FGSC A4 / ATCC 38163 / CBS 112.46 / NRRL 194 / M139) (Aspergillus nidulans).